The following is a 4870-amino-acid chain: Malformin synthetase mlfA (4870 aa).

Residues 106–497 (ERRAANRPHS…CGRADTQVKL (392 aa)) form an adenylation 1 region. The region spanning 635–711 (LGLSQLEQEI…EASSLAEVQE (77 aa)) is the Carrier 1 domain. Serine 672 carries the post-translational modification O-(pantetheine 4'-phosphoryl)serine. Residues 749–1133 (EDVFPCTTMQ…ALNTLTLLQA (385 aa)) are condensation 1. An adenylation 2 region spans residues 1161-1550 (DRWVTRQPES…GRKDTQVKLR (390 aa)). The 78-residue stretch at 1688 to 1765 (TASSKLELTL…QLAAILGEAT (78 aa)) folds into the Carrier 2 domain. Serine 1725 carries the post-translational modification O-(pantetheine 4'-phosphoryl)serine. 2 disordered regions span residues 1764–1794 (ATGQPESSASSTTEEGFTFSTPDDSSTNDGV) and 1829–1859 (GSSSCKTPSVSSSSSSSSSRKKKSAKVVSPV). Low complexity-rich tracts occupy residues 1769–1792 (ESSASSTTEEGFTFSTPDDSSTND) and 1830–1846 (SSSCKTPSVSSSSSSSS). The interval 1898-2313 (EDIYPATALQ…GVSYRDKQTL (416 aa)) is condensation 2. The segment at 2336–2728 (VRTPHAPAVF…IGRRDGQLKL (393 aa)) is adenylation 3. The Carrier 3 domain occupies 2864–2940 (RPATAQEREM…QLMRHLSANG (77 aa)). At serine 2901 the chain carries O-(pantetheine 4'-phosphoryl)serine. Condensation regions lie at residues 2957–3422 (WVPL…TYDQ) and 3443–3862 (DIYP…EQLV). The adenylation 4 stretch occupies residues 3887–4277 (HSSREAACAW…VGRKDNQIKF (391 aa)). Residues 4411 to 4487 (MPFTAAECKM…DLAYRTANLV (77 aa)) form the Carrier 4 domain. At serine 4448 the chain carries O-(pantetheine 4'-phosphoryl)serine. Positions 4524–4837 (EVLPTTSFQR…LQTIVQHQNN (314 aa)) are condensation 5.

The protein belongs to the NRP synthetase family.

The protein operates within secondary metabolite biosynthesis. In terms of biological role, nonribosomal peptide synthetase; part of the gene cluster that mediates the biosynthesis of malformins, cyclic pentapeptides with a disulfide bond between 2 consecutive cysteins, that show potential anti-tumor as well as antimalarial and antitrypanosomal properties. The nonribosomal peptide synthetase mlfA is responsible of the formation of the cyclic pentapeptide. The malformin biosynthesis clusters in malformin-producing fungi also contain enzymes involved in the formation of the disulfide bond between the two consecutive cysteins within malformins, in addition to additional tailoring enzymes such as methyltransferases or oxidoreductases. They are also composed of up to 4 major facilitator superfamily transporters, and transcription factors probably involved in the regulation of the expression of those clusters. This Aspergillus niger (strain ATCC 1015 / CBS 113.46 / FGSC A1144 / LSHB Ac4 / NCTC 3858a / NRRL 328 / USDA 3528.7) protein is Malformin synthetase mlfA.